A 561-amino-acid polypeptide reads, in one-letter code: uncharacterized protein (561 aa).

Residues 314 to 323 (ANNGSGDSSS) show a composition bias toward low complexity. The segment at 314–366 (ANNGSGDSSSTALNNESPNTTPKSRTFFSPKGHRRNSSHVSSLTSRSTKKPIT) is disordered. Residues 324 to 340 (TALNNESPNTTPKSRTF) show a composition bias toward polar residues. Serine 514 is modified (phosphoserine).

Its subcellular location is the cytoplasm. This is an uncharacterized protein from Saccharomyces cerevisiae (strain ATCC 204508 / S288c) (Baker's yeast).